The primary structure comprises 271 residues: Phthiotriol/phenolphthiotriol dimycocerosates methyltransferase 1 (271 aa).

Belongs to the methyltransferase superfamily. Phthiotriol/phenolphthiotriol dimycocerosates methyltransferase family.

Its function is as follows. Catalyzes the methylation of the lipid moiety of the intermediate compounds phthiotriol and glycosylated phenolphthiotriol dimycoserosates to form phthiocerol dimycocerosates (DIM A) and glycosylated phenolphthiocerol dimycocerosates (PGL). The protein is Phthiotriol/phenolphthiotriol dimycocerosates methyltransferase 1 of Mycobacterium ulcerans (strain Agy99).